We begin with the raw amino-acid sequence, 202 residues long: Protease (202 aa).

Active-site residues include H55, D72, and C122.

Belongs to the peptidase C5 family. In terms of assembly, interacts with protease cofactor pVI-C; this interaction is necessary for protease activation.

The protein resides in the virion. It is found in the host nucleus. It carries out the reaction Cleaves proteins of the adenovirus and its host cell at two consensus sites: -Yaa-Xaa-Gly-Gly-|-Xaa- and -Yaa-Xaa-Gly-Xaa-|-Gly- (in which Yaa is Met, Ile or Leu, and Xaa is any amino acid).. Its activity is regulated as follows. Requires DNA and protease cofactor for maximal activation. Inside nascent virions, becomes partially activated by binding to the viral DNA, allowing it to cleave the cofactor that binds to the protease and fully activates it. Actin, like the viral protease cofactor, seems to act as a cofactor in the cleavage of cytokeratin 18 and of actin itself. Cleaves viral precursor proteins (pTP, pIIIa, pVI, pVII, pVIII, and pX) inside newly assembled particles giving rise to mature virions. Protease complexed to its cofactor slides along the viral DNA to specifically locate and cleave the viral precursors. Mature virions have a weakened organization compared to the unmature virions, thereby facilitating subsequent uncoating. Without maturation, the particle lacks infectivity and is unable to uncoat. Late in adenovirus infection, in the cytoplasm, may participate in the cytoskeleton destruction. Cleaves host cell cytoskeletal keratins K7 and K18. The chain is Protease from Bovine adenovirus 7 (BAdV-7).